Here is a 504-residue protein sequence, read N- to C-terminus: MNIKPEEITSIIRQQIENFNTNIETIDSGTIIQIGDGIARVYGLEDCMEGELIEFPNDVYGMALNLEQDNVGCVLLGSEEGIKEGNVVKRTKKVVEVPVGEALVGRVVNSLGMPIDGKGPVLTTETRDVEVPAPGVIDRQSVKEPLQTGIKAIDSMIPIGKGQRELIIGDRQTGKTAIAMDTILNQKGKDVICIYVAIGQKQSTVAHIVNDLTKMGAMDYTIVVSSTASDSAPLQYLAPYAGCSMGEYFMHKGKDVLIVYDDLSKHAVAYRTMSLLLRRPPGREAYPGDVFYLHSRLLERSARLSEKLGGGSLTALPIVETLAGDVTAYIPTNVISITDGQIFLESELFNAGQRPAVNAGISVSRVGGNAQIKAMKQVAGTLRLELAQYRELAAFSQFGSDLDKESVKRLEKGKRLVEILKQPQYGPMPVEKEIIILYAAVSNHLIDIPVNKIKEFEKELFNYIDTHYRDIGKDILEHKQLTDELKSKLDKAINDFKNVFLSEI.

169-176 lines the ATP pocket; sequence GDRQTGKT.

The protein belongs to the ATPase alpha/beta chains family. As to quaternary structure, F-type ATPases have 2 components, CF(1) - the catalytic core - and CF(0) - the membrane proton channel. CF(1) has five subunits: alpha(3), beta(3), gamma(1), delta(1), epsilon(1). CF(0) has three main subunits: a(1), b(2) and c(9-12). The alpha and beta chains form an alternating ring which encloses part of the gamma chain. CF(1) is attached to CF(0) by a central stalk formed by the gamma and epsilon chains, while a peripheral stalk is formed by the delta and b chains.

It is found in the cell membrane. The enzyme catalyses ATP + H2O + 4 H(+)(in) = ADP + phosphate + 5 H(+)(out). Functionally, produces ATP from ADP in the presence of a proton gradient across the membrane. The alpha chain is a regulatory subunit. This is ATP synthase subunit alpha from Clostridium botulinum (strain Loch Maree / Type A3).